Consider the following 178-residue polypeptide: CASP-like protein 2U3 (178 aa).

Residues 1–4 lie on the Cytoplasmic side of the membrane; sequence MACR. The chain crosses the membrane as a helical span at residues 5-25; that stretch reads VMEVLLRVLAILLSIAGALVM. Residues 26–52 lie on the Extracellular side of the membrane; it reads AKDKQDTFVMLGTVPVPLYARHSYVEA. The chain crosses the membrane as a helical span at residues 53 to 73; the sequence is FVFLVYANGIVAIYCFIAVLL. The Cytoplasmic segment spans residues 74–80; that stretch reads SLLAKSR. A helical membrane pass occupies residues 81 to 101; that stretch reads VLAGLLFFMDQALAYLLLAAA. Over 102-132 the chain is Extracellular; it reads AASTEVAYIAKRGEKKLVWGEVCSNFEHFCN. The helical transmembrane segment at 133–153 threads the bilayer; the sequence is LVGVSLVLTFLSVLVLVTLAI. Over 154-178 the chain is Cytoplasmic; sequence LSGKRLFGHPPLCAPPSTPPVHQGV.

Belongs to the Casparian strip membrane proteins (CASP) family. As to quaternary structure, homodimer and heterodimers.

It localises to the cell membrane. This chain is CASP-like protein 2U3, found in Pteridium aquilinum subsp. aquilinum (Bracken fern).